Here is a 304-residue protein sequence, read N- to C-terminus: Undecaprenyl-diphosphatase (304 aa).

A run of 8 helical transmembrane segments spans residues 5-25 (FLFI…EFVP), 47-67 (GFPE…VVVL), 72-92 (ISSS…LKTS), 111-131 (FGIN…LFHD), 137-157 (LFST…LIVI), 209-231 (ISGL…AMVG), 248-268 (TNWI…LVVI), and 283-303 (FAIY…TKVI).

It belongs to the UppP family.

It is found in the cell membrane. The enzyme catalyses di-trans,octa-cis-undecaprenyl diphosphate + H2O = di-trans,octa-cis-undecaprenyl phosphate + phosphate + H(+). Catalyzes the dephosphorylation of undecaprenyl diphosphate (UPP). Confers resistance to bacitracin. The sequence is that of Undecaprenyl-diphosphatase from Clostridium perfringens (strain 13 / Type A).